The following is a 700-amino-acid chain: Putative ankyrin repeat protein FPV018 (700 aa).

11 ANK repeats span residues D29 to M59, N63 to G92, R126 to M155, M204 to T233, A236 to S265, N270 to I299, D301 to C332, C395 to V424, Y428 to E457, Y461 to Q490, and D494 to F523.

The polypeptide is Putative ankyrin repeat protein FPV018 (Fowlpox virus (strain NVSL) (FPV)).